Consider the following 369-residue polypeptide: Porphobilinogen deaminase, chloroplastic (369 aa).

The N-terminal 46 residues, 1-46 (MEMTLYSSSSFSLPSAPSNPSLSLFTSSFRFSSFKTSPFSKCRIRA), are a transit peptide targeting the chloroplast. At cysteine 303 the chain carries S-(dipyrrolylmethanemethyl)cysteine.

It belongs to the HMBS family. The cofactor is dipyrromethane.

The protein resides in the plastid. It is found in the chloroplast. It carries out the reaction 4 porphobilinogen + H2O = hydroxymethylbilane + 4 NH4(+). Its pathway is porphyrin-containing compound metabolism; protoporphyrin-IX biosynthesis; coproporphyrinogen-III from 5-aminolevulinate: step 2/4. It participates in porphyrin-containing compound metabolism; chlorophyll biosynthesis. Its function is as follows. Tetrapolymerization of the monopyrrole PBG into the hydroxymethylbilane pre-uroporphyrinogen in several discrete steps. This chain is Porphobilinogen deaminase, chloroplastic (HEMC), found in Pisum sativum (Garden pea).